A 428-amino-acid polypeptide reads, in one-letter code: Histone deacetylase 3 (428 aa).

The histone deacetylase stretch occupies residues 3–316 (KTVAYFYDPD…WTYETSLLVE (314 aa)). 1D-myo-inositol 1,4,5,6-tetrakisphosphate is bound by residues His17, Gly21, and Lys25. Residue His135 is part of the active site. Zn(2+) is bound by residues Asp170, His172, and Asp259. Arg265 is a binding site for 1D-myo-inositol 1,4,5,6-tetrakisphosphate. Basic and acidic residues-rich tracts occupy residues 388 to 405 (DRTD…ENYS) and 415 to 428 (DGDH…DVEI). Residues 388–428 (DRTDEADAEERGPEENYSRPEAPNEFYDGDHDNDKESDVEI) are disordered. The residue at position 424 (Ser424) is a Phosphoserine.

This sequence belongs to the histone deacetylase family. HD type 1 subfamily. In terms of assembly, interacts with HDAC7 and HDAC9. Interacts with HDAC10, DAXX and DACH1. Found in a complex with NCOR1 and NCOR2. Component of the N-Cor repressor complex, at least composed of NCOR1, NCOR2, HDAC3, TBL1X, TBL1R, CORO2A and GPS2. Interacts with BCOR, MJD2A/JHDM3A, NRIP1, PRDM6 and SRY. Interacts with BTBD14B. Interacts with GLIS2. Interacts (via the DNA-binding domain) with NR2C1; the interaction recruits phosphorylated NR2C1 to PML bodies for sumoylation. Component of the Notch corepressor complex. Interacts with CBFA2T3 and NKAP. Interacts with APEX1; the interaction is not dependent on the acetylated status of APEX1. Interacts with and deacetylates MAPK14. Interacts with ZMYND15. Interacts with SMRT/NCOR2 and BCL6 on DNA enhancer elements. Interacts with INSM1. Interacts with XBP1; the interaction occurs in endothelial cell (EC) under disturbed flow. Interacts (via C-terminus) with CCAR2 (via N-terminus). Interacts with and deacetylates MEF2D. Interacts with BEND3. Interacts with NKAPL. Interacts with DHX36; this interaction occurs in a RNA-dependent manner. Interacts weakly with CRY1; this interaction is enhanced in the presence of FBXL3. Interacts with FBXL3 and BMAL1. Interacts with NCOR1. Interacts with RARA. Interacts with SETD5. Deubiquitinated on 'Lys-63'-linked ubiquitin chains by USP38; leading to a decreased level of histone acetylation. Post-translationally, sumoylated in vitro.

It is found in the nucleus. The protein resides in the chromosome. It localises to the cytoplasm. The protein localises to the cytosol. It carries out the reaction N(6)-acetyl-L-lysyl-[histone] + H2O = L-lysyl-[histone] + acetate. The enzyme catalyses N(6)-acetyl-L-lysyl-[protein] + H2O = L-lysyl-[protein] + acetate. The catalysed reaction is N(6)-(2E)-butenoyl-L-lysyl-[protein] + H2O = (2E)-2-butenoate + L-lysyl-[protein]. It catalyses the reaction N(6)-(2-hydroxyisobutanoyl)-L-lysyl-[protein] + H2O = 2-hydroxy-2-methylpropanoate + L-lysyl-[protein]. It carries out the reaction N(6)-[(S)-lactoyl]-L-lysyl-[protein] + H2O = (S)-lactate + L-lysyl-[protein]. Inositol tetraphosphate (1D-myo-inositol 1,4,5,6-tetrakisphosphate) promotes the histone deacetylase activity by acting as an intermolecular glue between HDAC3 and NCOR2, thereby promoting its association with the N-Cor complex, a prerequisite for the histone deacetylase activity. Histone deacetylase that catalyzes the deacetylation of lysine residues on the N-terminal part of the core histones (H2A, H2B, H3 and H4), and some other non-histone substrates. Histone deacetylation gives a tag for epigenetic repression and plays an important role in transcriptional regulation, cell cycle progression and developmental events. Histone deacetylases act via the formation of large multiprotein complexes, such as N-Cor repressor complex, which activate the histone deacetylase activity. Participates in the BCL6 transcriptional repressor activity by deacetylating the H3 'Lys-27' (H3K27) on enhancer elements, antagonizing EP300 acetyltransferase activity and repressing proximal gene expression. Acts as a molecular chaperone for shuttling phosphorylated NR2C1 to PML bodies for sumoylation. Contributes, together with XBP1 isoform 1, to the activation of NFE2L2-mediated HMOX1 transcription factor gene expression in a PI(3)K/mTORC2/Akt-dependent signaling pathway leading to endothelial cell (EC) survival under disturbed flow/oxidative stress. Regulates both the transcriptional activation and repression phases of the circadian clock in a deacetylase activity-independent manner. During the activation phase, promotes the accumulation of ubiquitinated BMAL1 at the E-boxes and during the repression phase, blocks FBXL3-mediated CRY1/2 ubiquitination and promotes the interaction of CRY1 and BMAL1. The NCOR1-HDAC3 complex regulates the circadian expression of the core clock gene BMAL1 and the genes involved in lipid metabolism in the liver. Also functions as a deacetylase for non-histone targets, such as KAT5, MEF2D, MAPK14, RARA and STAT3. Serves as a corepressor of RARA, mediating its deacetylation and repression, leading to inhibition of RARE DNA element binding. In association with RARA, plays a role in the repression of microRNA-10a and thereby in the inflammatory response. In addition to protein deacetylase activity, also acts as a protein-lysine deacylase by recognizing other acyl groups: catalyzes removal of (2E)-butenoyl (crotonyl), lactoyl (lactyl) and 2-hydroxyisobutanoyl (2-hydroxyisobutyryl) acyl groups from lysine residues, leading to protein decrotonylation, delactylation and de-2-hydroxyisobutyrylation, respectively. Catalyzes decrotonylation of MAPRE1/EB1. Mediates delactylation NBN/NBS1, thereby inhibiting DNA double-strand breaks (DSBs) via homologous recombination (HR). This chain is Histone deacetylase 3 (HDAC3), found in Pongo abelii (Sumatran orangutan).